The sequence spans 123 residues: Large ribosomal subunit protein uL14 (123 aa).

Belongs to the universal ribosomal protein uL14 family. Part of the 50S ribosomal subunit. Forms a cluster with proteins L3 and L19. In the 70S ribosome, L14 and L19 interact and together make contacts with the 16S rRNA in bridges B5 and B8.

Its function is as follows. Binds to 23S rRNA. Forms part of two intersubunit bridges in the 70S ribosome. This Blochmanniella pennsylvanica (strain BPEN) protein is Large ribosomal subunit protein uL14.